Here is a 467-residue protein sequence, read N- to C-terminus: Gamma-aminobutyric acid receptor subunit gamma-3 (467 aa).

The first 17 residues, 1 to 17, serve as a signal peptide directing secretion; that stretch reads MAAKLLLLLCLFSGLHA. The Extracellular segment spans residues 18 to 256; sequence RSRRVEEDDS…FELSRRMGYF (239 aa). Asparagine 110 is a glycosylation site (N-linked (GlcNAc...) asparagine). Cysteine 171 and cysteine 185 are disulfide-bonded. Residue asparagine 228 is glycosylated (N-linked (GlcNAc...) asparagine). Residues 257-277 traverse the membrane as a helical segment; the sequence is TIQTYIPCILTVVLSWVSFWI. The Cytoplasmic portion of the chain corresponds to 278–283; sequence KKDATP. Residues 284-303 form a helical membrane-spanning segment; that stretch reads ARTTLGITTVLTMTTLSTIA. The Extracellular segment spans residues 304–311; it reads RKSLPRVS. Residues 312–332 form a helical membrane-spanning segment; sequence YVTAMDLFVTVCFLFVFAALM. Topologically, residues 333 to 446 are cytoplasmic; sequence EYATLNYYSS…DVSELDSYSR (114 aa). The chain crosses the membrane as a helical span at residues 447-467; it reads VFFPTSFLLFNLVYWVGYLYL.

The protein belongs to the ligand-gated ion channel (TC 1.A.9) family. Gamma-aminobutyric acid receptor (TC 1.A.9.5) subfamily. GABRG3 sub-subfamily. Heteropentamer, formed by a combination of alpha (GABRA1-6), beta (GABRB1-3), gamma (GABRG1-3), delta (GABRD), epsilon (GABRE), rho (GABRR1-3), pi (GABRP) and theta (GABRQ) chains, each subunit exhibiting distinct physiological and pharmacological properties. May be palmitoylated. Expressed in brain.

It is found in the postsynaptic cell membrane. The protein resides in the cell membrane. The catalysed reaction is chloride(in) = chloride(out). With respect to regulation, allosterically potentiated by alphaxalone. Allosterically inhibited by pregnenolone sulfate. Inhibited by zinc and lanthanum. In terms of biological role, gamma subunit of the heteropentameric ligand-gated chloride channel gated by gamma-aminobutyric acid (GABA), a major inhibitory neurotransmitter in the brain. GABA-gated chloride channels, also named GABA(A) receptors (GABAAR), consist of five subunits arranged around a central pore and contain GABA active binding site(s) located at the alpha and beta subunit interface(s). When activated by GABA, GABAARs selectively allow the flow of chloride across the cell membrane down their electrochemical gradient. The chain is Gamma-aminobutyric acid receptor subunit gamma-3 from Rattus norvegicus (Rat).